Reading from the N-terminus, the 426-residue chain is Enolase (426 aa).

Gln-163 provides a ligand contact to (2R)-2-phosphoglycerate. Residue Glu-205 is the Proton donor of the active site. Asp-242, Glu-283, and Asp-310 together coordinate Mg(2+). The (2R)-2-phosphoglycerate site is built by Lys-335, Arg-364, Ser-365, and Lys-386. The active-site Proton acceptor is Lys-335.

The protein belongs to the enolase family. Requires Mg(2+) as cofactor.

The protein resides in the cytoplasm. Its subcellular location is the secreted. It localises to the cell surface. The catalysed reaction is (2R)-2-phosphoglycerate = phosphoenolpyruvate + H2O. The protein operates within carbohydrate degradation; glycolysis; pyruvate from D-glyceraldehyde 3-phosphate: step 4/5. In terms of biological role, catalyzes the reversible conversion of 2-phosphoglycerate (2-PG) into phosphoenolpyruvate (PEP). It is essential for the degradation of carbohydrates via glycolysis. The chain is Enolase from Cutibacterium acnes (strain DSM 16379 / KPA171202) (Propionibacterium acnes).